A 212-amino-acid chain; its full sequence is Thymidylate kinase (212 aa).

10 to 17 (GLEGAGKT) contributes to the ATP binding site.

Belongs to the thymidylate kinase family.

The catalysed reaction is dTMP + ATP = dTDP + ADP. Phosphorylation of dTMP to form dTDP in both de novo and salvage pathways of dTTP synthesis. This is Thymidylate kinase from Baumannia cicadellinicola subsp. Homalodisca coagulata.